A 165-amino-acid polypeptide reads, in one-letter code: Glutamyl-tRNA(Gln) amidotransferase subunit F, mitochondrial (165 aa).

Residues 1–19 (MKSILRSTTRNLITSSRRF) constitute a mitochondrion transit peptide.

The protein belongs to the GatF family. In terms of assembly, subunit of the heterotrimeric GatFAB amidotransferase (AdT) complex, composed of A, B and F subunits.

It localises to the mitochondrion inner membrane. The catalysed reaction is L-glutamyl-tRNA(Gln) + L-glutamine + ATP + H2O = L-glutaminyl-tRNA(Gln) + L-glutamate + ADP + phosphate + H(+). Allows the formation of correctly charged Gln-tRNA(Gln) through the transamidation of misacylated Glu-tRNA(Gln) in the mitochondria. The reaction takes place in the presence of glutamine and ATP through an activated gamma-phospho-Glu-tRNA(Gln). Required for proper protein synthesis within the mitochondrion. The polypeptide is Glutamyl-tRNA(Gln) amidotransferase subunit F, mitochondrial (Candida albicans (strain SC5314 / ATCC MYA-2876) (Yeast)).